A 570-amino-acid chain; its full sequence is Sulfite reductase [NADPH] hemoprotein beta-component (570 aa).

Residues Cys434, Cys440, Cys479, and Cys483 each contribute to the [4Fe-4S] cluster site. Position 483 (Cys483) interacts with siroheme.

It belongs to the nitrite and sulfite reductase 4Fe-4S domain family. In terms of assembly, alpha(8)-beta(8). The alpha component is a flavoprotein, the beta component is a hemoprotein. Siroheme serves as cofactor. The cofactor is [4Fe-4S] cluster.

The catalysed reaction is hydrogen sulfide + 3 NADP(+) + 3 H2O = sulfite + 3 NADPH + 4 H(+). Its pathway is sulfur metabolism; hydrogen sulfide biosynthesis; hydrogen sulfide from sulfite (NADPH route): step 1/1. Functionally, component of the sulfite reductase complex that catalyzes the 6-electron reduction of sulfite to sulfide. This is one of several activities required for the biosynthesis of L-cysteine from sulfate. The chain is Sulfite reductase [NADPH] hemoprotein beta-component from Escherichia coli (strain SMS-3-5 / SECEC).